The chain runs to 118 residues: Putative pterin-4-alpha-carbinolamine dehydratase (118 aa).

Belongs to the pterin-4-alpha-carbinolamine dehydratase family.

It carries out the reaction (4aS,6R)-4a-hydroxy-L-erythro-5,6,7,8-tetrahydrobiopterin = (6R)-L-erythro-6,7-dihydrobiopterin + H2O. The sequence is that of Putative pterin-4-alpha-carbinolamine dehydratase from Pseudomonas savastanoi pv. phaseolicola (strain 1448A / Race 6) (Pseudomonas syringae pv. phaseolicola (strain 1448A / Race 6)).